We begin with the raw amino-acid sequence, 411 residues long: Glucose-1-phosphate adenylyltransferase (411 aa).

Alpha-D-glucose 1-phosphate is bound by residues G162, 177–178, and S195; that span reads EK.

The protein belongs to the bacterial/plant glucose-1-phosphate adenylyltransferase family. Homotetramer.

The catalysed reaction is alpha-D-glucose 1-phosphate + ATP + H(+) = ADP-alpha-D-glucose + diphosphate. It participates in glycan biosynthesis; glycogen biosynthesis. Involved in the biosynthesis of ADP-glucose, a building block required for the elongation reactions to produce glycogen. Catalyzes the reaction between ATP and alpha-D-glucose 1-phosphate (G1P) to produce pyrophosphate and ADP-Glc. This is Glucose-1-phosphate adenylyltransferase from Thermodesulfovibrio yellowstonii (strain ATCC 51303 / DSM 11347 / YP87).